A 166-amino-acid chain; its full sequence is Disulfide bond formation protein B (166 aa).

Topologically, residues 1–11 (MCNKLFAGRRG) are cytoplasmic. A helical membrane pass occupies residues 12-28 (YFLGFVASFGLVGLALF). The Periplasmic portion of the chain corresponds to 29-46 (LQQKYNLEPCPLCISQRI). The cysteines at positions 38 and 41 are disulfide-linked. The chain crosses the membrane as a helical span at residues 47–63 (AFMALGILFLLAALHNP). At 64-69 (GRVGRK) the chain is on the cytoplasmic side. Residues 70–87 (VYGLLHVIAAATGIGIAA) form a helical membrane-spanning segment. At 88-144 (RHIWIQANPDKVMAECGAGFDYIMETFPLKKALDLIFKGTGECSAIDWTLFGLTIPQ) the chain is on the periplasmic side. The cysteines at positions 103 and 130 are disulfide-linked. Residues 145-163 (LSLIAFVGLGLFAVLLAFH) form a helical membrane-spanning segment. The Cytoplasmic segment spans residues 164-166 (KKA).

This sequence belongs to the DsbB family.

It is found in the cell inner membrane. Required for disulfide bond formation in some periplasmic proteins. Acts by oxidizing the DsbA protein. The sequence is that of Disulfide bond formation protein B from Methylobacillus flagellatus (strain ATCC 51484 / DSM 6875 / VKM B-1610 / KT).